A 496-amino-acid polypeptide reads, in one-letter code: Maturase K (496 aa).

The protein belongs to the intron maturase 2 family. MatK subfamily.

It localises to the plastid. It is found in the chloroplast. Functionally, usually encoded in the trnK tRNA gene intron. Probably assists in splicing its own and other chloroplast group II introns. The polypeptide is Maturase K (Paeonia lactiflora (Chinese peony)).